The chain runs to 358 residues: MAEPSLVSGGEEPEERVIEAALRPKNLHDFVGQHRVRKQLALVLEASKMRGRSADHVLMSGPPGLGKTTLAMIIAAEMNAPLRISSGPAIQHAGDLAAILSSLSEGEVLFLDEIHRMSRPAEEMLYMAMEDFRVDIVVGKGAGATAIPLELPPFTLVGATTRAGLLPGPLRDRFGFTGHLEFYSVAELELVLRRSAGLLDLKVNSAGFTEIAGRSRGTPRIANRLLRRVRDWALVHGIEQIDARSASAALDMYEVDERGLDRLDRSVLEALITKFNGGPVGLSTLAIAVGEEPETVETVAEPFLVREGLLGRTPRGRIAMASAWTHLGYAVPAGVFGQETLALYGEDENHAESVDTVG.

The large ATPase domain (RuvB-L) stretch occupies residues methionine 1–tyrosine 183. ATP-binding positions include leucine 22, arginine 23, glycine 64, lysine 67, threonine 68, threonine 69, glutamate 130–phenylalanine 132, arginine 173, tyrosine 183, and arginine 220. Threonine 68 lines the Mg(2+) pocket. Residues serine 184 to glutamate 254 form a small ATPAse domain (RuvB-S) region. Positions glutamate 257–glycine 358 are head domain (RuvB-H). DNA contacts are provided by arginine 312 and arginine 317.

Belongs to the RuvB family. As to quaternary structure, homohexamer. Forms an RuvA(8)-RuvB(12)-Holliday junction (HJ) complex. HJ DNA is sandwiched between 2 RuvA tetramers; dsDNA enters through RuvA and exits via RuvB. An RuvB hexamer assembles on each DNA strand where it exits the tetramer. Each RuvB hexamer is contacted by two RuvA subunits (via domain III) on 2 adjacent RuvB subunits; this complex drives branch migration. In the full resolvosome a probable DNA-RuvA(4)-RuvB(12)-RuvC(2) complex forms which resolves the HJ.

It is found in the cytoplasm. The catalysed reaction is ATP + H2O = ADP + phosphate + H(+). Functionally, the RuvA-RuvB-RuvC complex processes Holliday junction (HJ) DNA during genetic recombination and DNA repair, while the RuvA-RuvB complex plays an important role in the rescue of blocked DNA replication forks via replication fork reversal (RFR). RuvA specifically binds to HJ cruciform DNA, conferring on it an open structure. The RuvB hexamer acts as an ATP-dependent pump, pulling dsDNA into and through the RuvAB complex. RuvB forms 2 homohexamers on either side of HJ DNA bound by 1 or 2 RuvA tetramers; 4 subunits per hexamer contact DNA at a time. Coordinated motions by a converter formed by DNA-disengaged RuvB subunits stimulates ATP hydrolysis and nucleotide exchange. Immobilization of the converter enables RuvB to convert the ATP-contained energy into a lever motion, pulling 2 nucleotides of DNA out of the RuvA tetramer per ATP hydrolyzed, thus driving DNA branch migration. The RuvB motors rotate together with the DNA substrate, which together with the progressing nucleotide cycle form the mechanistic basis for DNA recombination by continuous HJ branch migration. Branch migration allows RuvC to scan DNA until it finds its consensus sequence, where it cleaves and resolves cruciform DNA. This is Holliday junction branch migration complex subunit RuvB from Paenarthrobacter aurescens (strain TC1).